A 265-amino-acid chain; its full sequence is MNMSVLTLQEYEFEKQFNEHEAIQWMQENWKKSFLFSALYAAFIFGGRHLMNKRAKFELRKPLVLWSLSLAVFSIFGAVRTAPYMLYILMTKGLKQSVCDQSFYIGPVSKFWAYAFVLSKAPELGDTIFIILRKQKLIFLHWYHHITVLLYSWYSYKDMVAGGGWFMTMNYGVHAVMYSYYALRAAGFRVSRKFAMFITLSQITQMLVGCVINYLVFSWMQHGQCHSHVQNIIWSSLMYLSYFVLFCHFFFEAYIGKTTKARKVD.

Asn-2 carries an N-linked (GlcNAc...) asparagine glycan. 7 helical membrane-spanning segments follow: residues 34–51 (FLFS…RHLM), 70–90 (LAVF…YILM), 111–131 (FWAY…IFII), 137–156 (LIFL…WYSY), 159–179 (MVAG…VMYS), 197–217 (FITL…YLVF), and 232–252 (IIWS…FFFE).

It belongs to the ELO family. ELOVL6 subfamily. In terms of processing, N-Glycosylated.

The protein resides in the endoplasmic reticulum membrane. The enzyme catalyses a very-long-chain acyl-CoA + malonyl-CoA + H(+) = a very-long-chain 3-oxoacyl-CoA + CO2 + CoA. It catalyses the reaction hexadecanoyl-CoA + malonyl-CoA + H(+) = 3-oxooctadecanoyl-CoA + CO2 + CoA. It carries out the reaction (9Z)-hexadecenoyl-CoA + malonyl-CoA + H(+) = 3-oxo-(11Z)-octadecenoyl-CoA + CO2 + CoA. The catalysed reaction is dodecanoyl-CoA + malonyl-CoA + H(+) = 3-oxotetradecanoyl-CoA + CO2 + CoA. The enzyme catalyses tetradecanoyl-CoA + malonyl-CoA + H(+) = 3-oxohexadecanoyl-CoA + CO2 + CoA. It catalyses the reaction (9Z)-octadecenoyl-CoA + malonyl-CoA + H(+) = 3-oxo-(11Z)-eicosenoyl-CoA + CO2 + CoA. It carries out the reaction (9Z,12Z)-octadecadienoyl-CoA + malonyl-CoA + H(+) = (11Z,14Z)-3-oxoicosa-11,14-dienoyl-CoA + CO2 + CoA. The catalysed reaction is (9Z,12Z,15Z)-octadecatrienoyl-CoA + malonyl-CoA + H(+) = (11Z,14Z,17Z)-3-oxoeicosatrienoyl-CoA + CO2 + CoA. It participates in lipid metabolism; fatty acid biosynthesis. With respect to regulation, the reaction is stimulated by the presence of HSD17B12, the enzyme catalyzing the second step of the elongation cycle. Its function is as follows. Catalyzes the first and rate-limiting reaction of the four reactions that constitute the long-chain fatty acids elongation cycle. This endoplasmic reticulum-bound enzymatic process allows the addition of 2 carbons to the chain of long- and very long-chain fatty acids (VLCFAs) per cycle. Condensing enzyme that elongates fatty acids with 12, 14 and 16 carbons with higher activity toward C16:0 acyl-CoAs. Catalyzes the synthesis of unsaturated C16 long chain fatty acids and, to a lesser extent, C18:0 and those with low desaturation degree. May participate in the production of saturated and monounsaturated VLCFAs of different chain lengths that are involved in multiple biological processes as precursors of membrane lipids and lipid mediators. In Gallus gallus (Chicken), this protein is Very long chain fatty acid elongase 6.